The sequence spans 55 residues: Large ribosomal subunit protein bL33 (55 aa).

Belongs to the bacterial ribosomal protein bL33 family.

The polypeptide is Large ribosomal subunit protein bL33 (Rhizobium johnstonii (strain DSM 114642 / LMG 32736 / 3841) (Rhizobium leguminosarum bv. viciae)).